The sequence spans 472 residues: tRNA-2-methylthio-N(6)-dimethylallyladenosine synthase (472 aa).

The 117-residue stretch at R22–S138 folds into the MTTase N-terminal domain. 6 residues coordinate [4Fe-4S] cluster: C31, C67, C101, C173, C177, and C180. Residues R159–E396 enclose the Radical SAM core domain. Positions I399–P467 constitute a TRAM domain.

The protein belongs to the methylthiotransferase family. MiaB subfamily. Monomer. Requires [4Fe-4S] cluster as cofactor.

It is found in the cytoplasm. The enzyme catalyses N(6)-dimethylallyladenosine(37) in tRNA + (sulfur carrier)-SH + AH2 + 2 S-adenosyl-L-methionine = 2-methylsulfanyl-N(6)-dimethylallyladenosine(37) in tRNA + (sulfur carrier)-H + 5'-deoxyadenosine + L-methionine + A + S-adenosyl-L-homocysteine + 2 H(+). Catalyzes the methylthiolation of N6-(dimethylallyl)adenosine (i(6)A), leading to the formation of 2-methylthio-N6-(dimethylallyl)adenosine (ms(2)i(6)A) at position 37 in tRNAs that read codons beginning with uridine. This chain is tRNA-2-methylthio-N(6)-dimethylallyladenosine synthase, found in Synechococcus sp. (strain CC9902).